A 397-amino-acid polypeptide reads, in one-letter code: MTTLLNPYFGEFGGMYVPQILMPALNQLEEAFVSAQKDPEFQAQFADLLKNYAGRPTALTKCQNITAGTRTTLYLKREDLLHGGAHKTNQVLGQALLAKRMGKSEIIAETGAGQHGVASALASALLGLKCRIYMGAKDVERQSPNVFRMRLMGAEVIPVHSGSATLKDACNEALRDWSGSYETAHYMLGTAAGPHPYPTIVREFQRMIGEETKAQILDKEGRLPDAVIACVGGGSNAIGMFADFINDTSVGLIGVEPGGHGIETGEHGAPLKHGRVGIYFGMKAPMMQTADGQIEESYSISAGLDFPSVGPQHAYLNSIGRADYVSITDDEALEAFKTLCRHEGIIPALESSHALAHALKMMREQPEKEQLLVVNLSGRGDKDIFTVHDILKARGEI.

Position 87 is an N6-(pyridoxal phosphate)lysine (lysine 87).

The protein belongs to the TrpB family. In terms of assembly, tetramer of two alpha and two beta chains. Requires pyridoxal 5'-phosphate as cofactor.

The catalysed reaction is (1S,2R)-1-C-(indol-3-yl)glycerol 3-phosphate + L-serine = D-glyceraldehyde 3-phosphate + L-tryptophan + H2O. The protein operates within amino-acid biosynthesis; L-tryptophan biosynthesis; L-tryptophan from chorismate: step 5/5. Functionally, the beta subunit is responsible for the synthesis of L-tryptophan from indole and L-serine. The polypeptide is Tryptophan synthase beta chain (Salmonella agona (strain SL483)).